The following is a 240-amino-acid chain: Probable transcriptional regulatory protein VFMJ11_A0186 (240 aa).

The protein belongs to the TACO1 family.

Its subcellular location is the cytoplasm. The chain is Probable transcriptional regulatory protein VFMJ11_A0186 from Aliivibrio fischeri (strain MJ11) (Vibrio fischeri).